The sequence spans 202 residues: Small ribosomal subunit protein uS4 (202 aa).

Positions 1–13 (MSRYRGPRLRVTR) are enriched in basic residues. The interval 1 to 42 (MSRYRGPRLRVTRRLGELPGLTRKASKKSNPPGQHGQARRKR) is disordered. The 63-residue stretch at 90 to 152 (NRLDNVCFRL…KASKKLVEGN (63 aa)) folds into the S4 RNA-binding domain.

The protein belongs to the universal ribosomal protein uS4 family. As to quaternary structure, part of the 30S ribosomal subunit. Contacts protein S5. The interaction surface between S4 and S5 is involved in control of translational fidelity.

One of the primary rRNA binding proteins, it binds directly to 16S rRNA where it nucleates assembly of the body of the 30S subunit. Its function is as follows. With S5 and S12 plays an important role in translational accuracy. This Prochlorococcus marinus (strain MIT 9312) protein is Small ribosomal subunit protein uS4.